A 477-amino-acid polypeptide reads, in one-letter code: Glycogen synthase (477 aa).

Position 15 (Lys15) interacts with ADP-alpha-D-glucose.

This sequence belongs to the glycosyltransferase 1 family. Bacterial/plant glycogen synthase subfamily.

It carries out the reaction [(1-&gt;4)-alpha-D-glucosyl](n) + ADP-alpha-D-glucose = [(1-&gt;4)-alpha-D-glucosyl](n+1) + ADP + H(+). Its pathway is glycan biosynthesis; glycogen biosynthesis. Synthesizes alpha-1,4-glucan chains using ADP-glucose. This chain is Glycogen synthase, found in Streptococcus pneumoniae (strain ATCC 700669 / Spain 23F-1).